Consider the following 92-residue polypeptide: SPbeta prophage-derived DNA-binding protein HU 2 (92 aa).

Thr4 carries the phosphothreonine modification. The tract at residues 55–77 (RAARKGRNPQTGEEIDIPATKAP) is disordered.

It belongs to the bacterial histone-like protein family. As to quaternary structure, homodimer.

Its function is as follows. Histone-like DNA-binding protein which is capable of wrapping DNA to stabilize it, and thus to prevent its denaturation under extreme environmental conditions. The polypeptide is SPbeta prophage-derived DNA-binding protein HU 2 (hup2) (Bacillus subtilis (strain 168)).